Reading from the N-terminus, the 519-residue chain is Transmembrane protein 180 (519 aa).

Over 1–11 (MGLDWPQAWLL) the chain is Extracellular. A helical membrane pass occupies residues 12-43 (GLPIAVVYGSLALFTSILHNVFLLYYVDTFVS). Over 44-55 (VYKINKVSFWVG) the chain is Cytoplasmic. The helical transmembrane segment at 56-74 (ETVFLLWNSFNDPLFGWLS) threads the bilayer. Topologically, residues 75–100 (DRQLLSSQPRSGAGLSSRDVVLTRVR) are extracellular. Residues 101-118 (ALGWHGPLLALSFLAFWV) traverse the membrane as a helical segment. Topologically, residues 119 to 126 (PWAPAGLQ) are cytoplasmic. A helical membrane pass occupies residues 127–151 (FLLCLCLYDGFLTLVDLHHHALLAD). Over 152 to 155 (LALS) the chain is Extracellular. The helical transmembrane segment at 156–179 (SHDRTHLNFYCSLFSAAGSLSVFA) threads the bilayer. At 180–191 (SYAFWNKEDFSS) the chain is on the cytoplasmic side. A helical transmembrane segment spans residues 192–223 (FRAFCVVLAAGSGLGFLGTTQLLKRQIEATRR). Over 224–264 (DRGCPGLDLDGGVCEEEPPVGGEEAGNITLGQYLRQLARHQ) the chain is Extracellular. The N-linked (GlcNAc...) asparagine glycan is linked to Asn-250. The chain crosses the membrane as a helical span at residues 265–292 (NFLWFVGMDLVQVFHCHFNSNFFPLFLE). Topologically, residues 293–305 (HLLSDHISLSTGS) are cytoplasmic. A helical transmembrane segment spans residues 306 to 325 (FLLGISYVAPHLNNLYFLPL). At 326 to 330 (CRRWG) the chain is on the extracellular side. A helical transmembrane segment spans residues 331–350 (VYAVVRGLFLLKLSLSLLML). Over 351–358 (LAGPDHPG) the chain is Cytoplasmic. A helical membrane pass occupies residues 359–393 (LLCFFIASNRVFTEGTCKLLTLVVTDLVDEDLVLN). Topologically, residues 394-402 (HRKQAASAL) are extracellular. Residues 403–429 (LFGMVALVTKPGQTFAPLLGTWLLCFY) traverse the membrane as a helical segment. Topologically, residues 430 to 468 (TGHDLFQQSPMTPVGSVRPWPELPAPAPAPAQAPTLRQG) are cytoplasmic. The helical transmembrane segment at 469-487 (CFYLLVFVPITCALLQLFT) threads the bilayer. The Extracellular portion of the chain corresponds to 488–519 (WSQFTLHGRRLRTVKAQRQNLAQIHTLNIKMV).

The protein localises to the cell membrane. The sequence is that of Transmembrane protein 180 from Mus musculus (Mouse).